Consider the following 283-residue polypeptide: Syntaxin VAM3 (283 aa).

A disordered region spans residues 1–26 (MSFFDIEAQSSKGNSQQEPQFSTNQK). Topologically, residues 1–261 (MSFFDIEAQS…ADQHQRDRNK (261 aa)) are cytoplasmic. The segment covering 8 to 25 (AQSSKGNSQQEPQFSTNQ) has biased composition (polar residues). Coiled-coil stretches lie at residues 28 to 48 (KELS…EKEC) and 84 to 111 (LIHQ…SYNQ). 2 disordered regions span residues 116-146 (FPLK…DPES) and 162-182 (NEGQ…QGLS). Residues 127–144 (SKERKDIHPRTEAVRQDP) are compositionally biased toward basic and acidic residues. The stretch at 169 to 189 (QLQEEQEQQQQGLSQEELDFQ) forms a coiled coil. The region spanning 190 to 252 (TIIHQERSQQ…QNANKQLTRA (63 aa)) is the t-SNARE coiled-coil homology domain. Residues 262–282 (CGKVTLIIIIVVCMVVLLAVL) traverse the membrane as a helical; Anchor for type IV membrane protein segment. Residue Ser-283 is a topological domain, vacuolar.

Belongs to the syntaxin family. In terms of assembly, associates with VAM7.

It is found in the vacuole membrane. In terms of biological role, required for vacuolar assembly. Provides the t-SNARE function in a late step of the vacuolar assembly. Required for homotypic vacuole membrane fusion, autophagy and fusion of biosynthetic transport vesicles with the vacuole. Required for the delivery of alpha-factor receptor-ligand complexes to the vacuole. This chain is Syntaxin VAM3 (VAM3), found in Saccharomyces cerevisiae (strain ATCC 204508 / S288c) (Baker's yeast).